Here is a 352-residue protein sequence, read N- to C-terminus: Photosystem II D2 protein (352 aa).

Thr-2 carries the N-acetylthreonine modification. Thr-2 carries the post-translational modification Phosphothreonine. Residues 40–60 (TAYLALGGWLTGTTFVTSWYT) form a helical membrane-spanning segment. His-117 contributes to the chlorophyll a binding site. Residues 124–140 (GFMLRQFEIARSVKLRP) traverse the membrane as a helical segment. Pheophytin a-binding residues include Gln-129 and Asn-142. A helical membrane pass occupies residues 152–165 (VFVSVFLIYPLGQS). His-197 contributes to the chlorophyll a binding site. The chain crosses the membrane as a helical span at residues 207–227 (AALLCAIHGATVENTLFEDGD). A plastoquinone contacts are provided by His-214 and Phe-261. Position 214 (His-214) interacts with Fe cation. His-268 provides a ligand contact to Fe cation. The chain crosses the membrane as a helical span at residues 278–294 (GLWMSALGVVGLALNLR).

Belongs to the reaction center PufL/M/PsbA/D family. PSII is composed of 1 copy each of membrane proteins PsbA, PsbB, PsbC, PsbD, PsbE, PsbF, PsbH, PsbI, PsbJ, PsbK, PsbL, PsbM, PsbT, PsbX, PsbY, PsbZ, Psb30/Ycf12, at least 3 peripheral proteins of the oxygen-evolving complex and a large number of cofactors. It forms dimeric complexes. The D1/D2 heterodimer binds P680, chlorophylls that are the primary electron donor of PSII, and subsequent electron acceptors. It shares a non-heme iron and each subunit binds pheophytin, quinone, additional chlorophylls, carotenoids and lipids. There is also a Cl(-1) ion associated with D1 and D2, which is required for oxygen evolution. The PSII complex binds additional chlorophylls, carotenoids and specific lipids. serves as cofactor.

It is found in the plastid. It localises to the chloroplast thylakoid membrane. It catalyses the reaction 2 a plastoquinone + 4 hnu + 2 H2O = 2 a plastoquinol + O2. Its function is as follows. Photosystem II (PSII) is a light-driven water:plastoquinone oxidoreductase that uses light energy to abstract electrons from H(2)O, generating O(2) and a proton gradient subsequently used for ATP formation. It consists of a core antenna complex that captures photons, and an electron transfer chain that converts photonic excitation into a charge separation. The D1/D2 (PsbA/PsbD) reaction center heterodimer binds P680, the primary electron donor of PSII as well as several subsequent electron acceptors. D2 is needed for assembly of a stable PSII complex. The polypeptide is Photosystem II D2 protein (Pleurastrum terricola (Filamentous green alga)).